A 611-amino-acid chain; its full sequence is Chaperone protein DnaK (611 aa).

T173 is modified (phosphothreonine; by autocatalysis). The span at 579–592 (AAGQAEGAQGAQDA) shows a compositional bias: low complexity. The segment at 579-598 (AAGQAEGAQGAQDAGAKKDN) is disordered.

It belongs to the heat shock protein 70 family.

Its function is as follows. Acts as a chaperone. This chain is Chaperone protein DnaK, found in Bacillus cereus (strain AH187).